The following is a 285-amino-acid chain: 1,4-dihydroxy-2-naphthoyl-CoA synthase (285 aa).

Substrate is bound by residues R45, 84–89 (SGGDQK), Y97, 129–133 (YSIGG), T155, S161, Y258, and K273. 154 to 156 (QTG) contributes to the hydrogencarbonate binding site.

It belongs to the enoyl-CoA hydratase/isomerase family. MenB subfamily. As to quaternary structure, homohexamer. Dimer of a homotrimer. Hydrogencarbonate serves as cofactor.

It carries out the reaction 2-succinylbenzoyl-CoA + H(+) = 1,4-dihydroxy-2-naphthoyl-CoA + H2O. It participates in quinol/quinone metabolism; 1,4-dihydroxy-2-naphthoate biosynthesis; 1,4-dihydroxy-2-naphthoate from chorismate: step 6/7. The protein operates within quinol/quinone metabolism; menaquinone biosynthesis. Inhibited by sulfite and nitrate. Functionally, converts o-succinylbenzoyl-CoA (OSB-CoA) to 1,4-dihydroxy-2-naphthoyl-CoA (DHNA-CoA). This chain is 1,4-dihydroxy-2-naphthoyl-CoA synthase, found in Escherichia coli (strain K12).